The following is a 573-amino-acid chain: Methionine--tRNA ligase (573 aa).

The 'HIGH' region motif lies at 10 to 20 (PYVNSVPHLGN). Residues Cys-143, Cys-146, Cys-156, and Cys-159 each coordinate Zn(2+). Positions 333–337 (KFSKS) match the 'KMSKS' region motif. Lys-336 is a binding site for ATP.

Belongs to the class-I aminoacyl-tRNA synthetase family. MetG type 1 subfamily. The cofactor is Zn(2+).

The protein localises to the cytoplasm. The catalysed reaction is tRNA(Met) + L-methionine + ATP = L-methionyl-tRNA(Met) + AMP + diphosphate. In terms of biological role, is required not only for elongation of protein synthesis but also for the initiation of all mRNA translation through initiator tRNA(fMet) aminoacylation. The protein is Methionine--tRNA ligase of Saccharolobus islandicus (strain M.14.25 / Kamchatka #1) (Sulfolobus islandicus).